We begin with the raw amino-acid sequence, 365 residues long: Coxsackievirus and adenovirus receptor (365 aa).

A signal peptide spans 1–19 (MALLLCFVLLCGVVDFARS). Ig-like C2-type domains follow at residues 20-134 (LSIT…KKIH) and 141-228 (PSGA…LRLN). Residues 20–237 (LSITTPEEMI…NVVPPSNKAG (218 aa)) lie on the Extracellular side of the membrane. 2 cysteine pairs are disulfide-bonded: Cys-41–Cys-120 and Cys-162–Cys-212. Residues Asn-106 and Asn-201 are each glycosylated (N-linked (GlcNAc...) asparagine). The chain crosses the membrane as a helical span at residues 238–258 (LIAGAIIGTLLALALIGLIIF). 2 S-palmitoyl cysteine lipidation sites follow: Cys-259 and Cys-260. At 259-365 (CCRKKRREEK…PAQSKDGSIV (107 aa)) the chain is on the cytoplasmic side. Basic and acidic residues predominate over residues 269-282 (YEKEVHHDIREDVP). A disordered region spans residues 269 to 343 (YEKEVHHDIR…TLPPAKVAAP (75 aa)). Residues 286-322 (SRTSTARSYIGSNHSSLGSMSPSNMEGYSKTQYNQVP) are compositionally biased toward polar residues. Ser-297, Ser-304, Ser-306, Ser-323, Ser-332, and Ser-363 each carry phosphoserine. Positions 360–365 (KDGSIV) match the PDZ-binding motif.

Monomer. May form homodimer. Interacts with LNX, MAGI1, DLG4, PRKCABP, TJP1 and CTNNB1. Interacts with MPDZ; recruits MPDZ to intercellular contact sites. Interacts with JAML (homodimeric form). Secreted isoform 3, isoform 4 and isoform 5 can interact with the extracellular domain of the receptor. In terms of assembly, (Microbial infection) Interacts with adenovirus subgroups A, C, D, E and F fiber proteins as well as coxsackievirus B1, B2, B3, B4, B5 and B6 capsid proteins. N-glycosylated. In terms of processing, palmitoylated on Cys-259 and/or Cys-260; required for proper localization to the plasma membrane. In terms of tissue distribution, expressed in pancreas, brain, heart, small intestine, testis, prostate and at a lower level in liver and lung. Isoform 5 is ubiquitously expressed. Isoform 3 is expressed in heart, lung and pancreas. In skeletal muscle, isoform 1 is found at the neuromuscular junction and isoform 2 is found in blood vessels. In cardiac muscle, isoform 1 and isoform 2 are found at intercalated disks. In heart expressed in subendothelial layers of the vessel wall but not in the luminal endothelial surface. Expression is elevated in hearts with dilated cardiomyopathy.

It localises to the cell membrane. The protein resides in the basolateral cell membrane. Its subcellular location is the cell junction. It is found in the tight junction. The protein localises to the adherens junction. It localises to the secreted. Component of the epithelial apical junction complex that may function as a homophilic cell adhesion molecule and is essential for tight junction integrity. Also involved in transepithelial migration of leukocytes through adhesive interactions with JAML a transmembrane protein of the plasma membrane of leukocytes. The interaction between both receptors also mediates the activation of gamma-delta T-cells, a subpopulation of T-cells residing in epithelia and involved in tissue homeostasis and repair. Upon epithelial CXADR-binding, JAML induces downstream cell signaling events in gamma-delta T-cells through PI3-kinase and MAP kinases. It results in proliferation and production of cytokines and growth factors by T-cells that in turn stimulate epithelial tissues repair. In terms of biological role, (Microbial infection) Acts as a receptor for adenovirus type C. Its function is as follows. (Microbial infection) Acts as a receptor for Coxsackievirus B1 to B6. This is Coxsackievirus and adenovirus receptor (CXADR) from Homo sapiens (Human).